A 183-amino-acid polypeptide reads, in one-letter code: Chromophore lyase CpcT/CpeT 4 (183 aa).

The protein belongs to the CpcT/CpeT biliprotein lyase family.

Functionally, covalently attaches a chromophore to Cys residue(s) of phycobiliproteins. This is Chromophore lyase CpcT/CpeT 4 from Gloeobacter violaceus (strain ATCC 29082 / PCC 7421).